A 98-amino-acid chain; its full sequence is HssA/B-like protein 39 (98 aa).

A disordered region spans residues M1–I21.

It belongs to the hssA/B family.

The protein is HssA/B-like protein 39 (hssl39) of Dictyostelium discoideum (Social amoeba).